A 591-amino-acid polypeptide reads, in one-letter code: L-fucose isomerase (591 aa).

Residues glutamate 337 and aspartate 361 each act as proton acceptor in the active site. The Mn(2+) site is built by glutamate 337, aspartate 361, and histidine 528.

The protein belongs to the L-fucose isomerase family. In terms of assembly, homohexamer. Requires Mn(2+) as cofactor.

The protein localises to the cytoplasm. The catalysed reaction is L-fucose = L-fuculose. It participates in carbohydrate degradation; L-fucose degradation; L-lactaldehyde and glycerone phosphate from L-fucose: step 1/3. Its function is as follows. Converts the aldose L-fucose into the corresponding ketose L-fuculose. The chain is L-fucose isomerase from Klebsiella pneumoniae subsp. pneumoniae (strain ATCC 700721 / MGH 78578).